The primary structure comprises 221 residues: tRNA (guanine-N(7)-)-methyltransferase (221 aa).

Positions 43, 68, and 123 each coordinate S-adenosyl-L-methionine. Asp123 is a catalytic residue. Residues Lys127, Asp159, and 199–202 (TEYE) contribute to the substrate site.

It belongs to the class I-like SAM-binding methyltransferase superfamily. TrmB family.

It carries out the reaction guanosine(46) in tRNA + S-adenosyl-L-methionine = N(7)-methylguanosine(46) in tRNA + S-adenosyl-L-homocysteine. It participates in tRNA modification; N(7)-methylguanine-tRNA biosynthesis. Its function is as follows. Catalyzes the formation of N(7)-methylguanine at position 46 (m7G46) in tRNA. In Mycoplasma mycoides subsp. mycoides SC (strain CCUG 32753 / NCTC 10114 / PG1), this protein is tRNA (guanine-N(7)-)-methyltransferase.